The chain runs to 568 residues: T-complex protein 1 subunit theta (568 aa).

A Glycyl lysine isopeptide (Lys-Gly) (interchain with G-Cter in ubiquitin) cross-link involves residue K15. Residue S505 is modified to Phosphoserine.

This sequence belongs to the TCP-1 chaperonin family. In terms of assembly, heterooligomeric complex of about 850 to 900 kDa that forms two stacked rings, 12 to 16 nm in diameter.

It is found in the cytoplasm. Molecular chaperone; assists the folding of proteins upon ATP hydrolysis. Known to play a role, in vitro, in the folding of actin and tubulin. In yeast may play a role in mitotic spindle formation. In Saccharomyces cerevisiae (strain ATCC 204508 / S288c) (Baker's yeast), this protein is T-complex protein 1 subunit theta (CCT8).